The primary structure comprises 199 residues: FMN-dependent NADH:quinone oxidoreductase (199 aa).

Residues Ser-9, 15–17, and 95–98 each bind FMN; these read SNS and MYNF.

This sequence belongs to the azoreductase type 1 family. As to quaternary structure, homodimer. It depends on FMN as a cofactor.

It carries out the reaction 2 a quinone + NADH + H(+) = 2 a 1,4-benzosemiquinone + NAD(+). It catalyses the reaction N,N-dimethyl-1,4-phenylenediamine + anthranilate + 2 NAD(+) = 2-(4-dimethylaminophenyl)diazenylbenzoate + 2 NADH + 2 H(+). Its function is as follows. Quinone reductase that provides resistance to thiol-specific stress caused by electrophilic quinones. Functionally, also exhibits azoreductase activity. Catalyzes the reductive cleavage of the azo bond in aromatic azo compounds to the corresponding amines. The sequence is that of FMN-dependent NADH:quinone oxidoreductase from Aromatoleum aromaticum (strain DSM 19018 / LMG 30748 / EbN1) (Azoarcus sp. (strain EbN1)).